Here is a 258-residue protein sequence, read N- to C-terminus: Large ribosomal subunit protein uL2x (258 aa).

Positions 211–231 are disordered; it reads HGGGNHQHIGHASTVRRDAPP.

This sequence belongs to the universal ribosomal protein uL2 family.

The protein is Large ribosomal subunit protein uL2x (RPL8C) of Arabidopsis thaliana (Mouse-ear cress).